The sequence spans 402 residues: N-acetyltransferase Eis (402 aa).

The N-acetyltransferase domain occupies 3–154 (VTLCSPTEDD…RFARFHADAP (152 aa)). Residues 85–87 (VAV), 93–98 (RRGLLR), and 121–122 (SE) each bind acetyl-CoA. The active-site Proton donor is Tyr126. The active-site Proton acceptor; via carboxylate is the Phe402.

This sequence belongs to the acetyltransferase Eis family. As to quaternary structure, homohexamer; trimer of dimers.

The protein localises to the secreted. It localises to the host cytoplasmic vesicle. The protein resides in the host phagosome. It is found in the extracellular vesicle. Its subcellular location is the bacterial extracellular vesicle. The protein localises to the host extracellular space. The catalysed reaction is L-lysyl-[protein] + acetyl-CoA = N(6)-acetyl-L-lysyl-[protein] + CoA + H(+). Effector that is released into the host cell and affects host immune responses. Acts as an acetyltransferase that acetylates lysine residues of host proteins. The chain is N-acetyltransferase Eis from Mycobacterium bovis (strain BCG / Pasteur 1173P2).